Consider the following 200-residue polypeptide: Holliday junction resolvase RecU (200 aa).

The interval 1–25 (MTIRYPNGKRYNQASQPHKTPIKKH) is disordered. The Mg(2+) site is built by T85, D87, E100, and Q119.

It belongs to the RecU family. The cofactor is Mg(2+).

It localises to the cytoplasm. The enzyme catalyses Endonucleolytic cleavage at a junction such as a reciprocal single-stranded crossover between two homologous DNA duplexes (Holliday junction).. Functionally, endonuclease that resolves Holliday junction intermediates in genetic recombination. Cleaves mobile four-strand junctions by introducing symmetrical nicks in paired strands. Promotes annealing of linear ssDNA with homologous dsDNA. Required for DNA repair, homologous recombination and chromosome segregation. The protein is Holliday junction resolvase RecU of Bacillus thuringiensis (strain Al Hakam).